The primary structure comprises 811 residues: Glycerol-3-phosphate acyltransferase (811 aa).

The short motif at 305 to 310 (CHRSHI) is the HXXXXD motif element.

Belongs to the GPAT/DAPAT family.

The protein localises to the cell inner membrane. The enzyme catalyses sn-glycerol 3-phosphate + an acyl-CoA = a 1-acyl-sn-glycero-3-phosphate + CoA. The protein operates within phospholipid metabolism; CDP-diacylglycerol biosynthesis; CDP-diacylglycerol from sn-glycerol 3-phosphate: step 1/3. The chain is Glycerol-3-phosphate acyltransferase from Histophilus somni (strain 129Pt) (Haemophilus somnus).